The primary structure comprises 287 residues: ATP synthase gamma chain (287 aa).

The protein belongs to the ATPase gamma chain family. In terms of assembly, F-type ATPases have 2 components, CF(1) - the catalytic core - and CF(0) - the membrane proton channel. CF(1) has five subunits: alpha(3), beta(3), gamma(1), delta(1), epsilon(1). CF(0) has three main subunits: a, b and c.

Its subcellular location is the cell inner membrane. Its function is as follows. Produces ATP from ADP in the presence of a proton gradient across the membrane. The gamma chain is believed to be important in regulating ATPase activity and the flow of protons through the CF(0) complex. This is ATP synthase gamma chain from Shigella boydii serotype 4 (strain Sb227).